Here is a 218-residue protein sequence, read N- to C-terminus: Probable transaldolase (218 aa).

The Schiff-base intermediate with substrate role is filled by Lys-87.

The protein belongs to the transaldolase family. Type 3B subfamily.

The protein resides in the cytoplasm. It catalyses the reaction D-sedoheptulose 7-phosphate + D-glyceraldehyde 3-phosphate = D-erythrose 4-phosphate + beta-D-fructose 6-phosphate. Its pathway is carbohydrate degradation; pentose phosphate pathway; D-glyceraldehyde 3-phosphate and beta-D-fructose 6-phosphate from D-ribose 5-phosphate and D-xylulose 5-phosphate (non-oxidative stage): step 2/3. Its function is as follows. Transaldolase is important for the balance of metabolites in the pentose-phosphate pathway. The polypeptide is Probable transaldolase (Bacteroides thetaiotaomicron (strain ATCC 29148 / DSM 2079 / JCM 5827 / CCUG 10774 / NCTC 10582 / VPI-5482 / E50)).